Here is a 166-residue protein sequence, read N- to C-terminus: Large ribosomal subunit protein uL10 (166 aa).

The protein belongs to the universal ribosomal protein uL10 family. As to quaternary structure, part of the ribosomal stalk of the 50S ribosomal subunit. The N-terminus interacts with L11 and the large rRNA to form the base of the stalk. The C-terminus forms an elongated spine to which L12 dimers bind in a sequential fashion forming a multimeric L10(L12)X complex.

In terms of biological role, forms part of the ribosomal stalk, playing a central role in the interaction of the ribosome with GTP-bound translation factors. In Bacillus cereus (strain G9842), this protein is Large ribosomal subunit protein uL10.